Reading from the N-terminus, the 215-residue chain is Oligoribonuclease (215 aa).

An Exonuclease domain is found at 5-170 (LVWIDCEMTG…ADIHESIREL (166 aa)). Y127 is a catalytic residue. The tract at residues 196–215 (LSDGAGAQEETDSAEAPQSG) is disordered.

The protein belongs to the oligoribonuclease family.

The protein localises to the cytoplasm. Functionally, 3'-to-5' exoribonuclease specific for small oligoribonucleotides. The chain is Oligoribonuclease from Mycobacterium bovis (strain BCG / Pasteur 1173P2).